Reading from the N-terminus, the 403-residue chain is Phosphoglycerate kinase (403 aa).

Substrate-binding positions include 22–24, Arg37, 60–63, Arg119, and Arg156; these read DLN and HLGR. ATP is bound by residues Lys206, Gly302, Glu333, and 359–362; that span reads GGDS.

The protein belongs to the phosphoglycerate kinase family. Monomer.

It is found in the cytoplasm. It carries out the reaction (2R)-3-phosphoglycerate + ATP = (2R)-3-phospho-glyceroyl phosphate + ADP. Its pathway is carbohydrate degradation; glycolysis; pyruvate from D-glyceraldehyde 3-phosphate: step 2/5. In Leifsonia xyli subsp. xyli (strain CTCB07), this protein is Phosphoglycerate kinase.